We begin with the raw amino-acid sequence, 477 residues long: UDP-N-acetylmuramoylalanine--D-glutamate ligase (477 aa).

127 to 133 provides a ligand contact to ATP; sequence GTNGKTT.

This sequence belongs to the MurCDEF family.

Its subcellular location is the cytoplasm. It catalyses the reaction UDP-N-acetyl-alpha-D-muramoyl-L-alanine + D-glutamate + ATP = UDP-N-acetyl-alpha-D-muramoyl-L-alanyl-D-glutamate + ADP + phosphate + H(+). Its pathway is cell wall biogenesis; peptidoglycan biosynthesis. Functionally, cell wall formation. Catalyzes the addition of glutamate to the nucleotide precursor UDP-N-acetylmuramoyl-L-alanine (UMA). The polypeptide is UDP-N-acetylmuramoylalanine--D-glutamate ligase (Prochlorococcus marinus (strain MIT 9515)).